We begin with the raw amino-acid sequence, 391 residues long: Argininosuccinate synthase (391 aa).

Residue 6–14 participates in ATP binding; that stretch reads AYSGGLDTT. Tyrosine 84 contacts L-citrulline. Residue glycine 114 participates in ATP binding. Positions 116, 120, and 121 each coordinate L-aspartate. Asparagine 120 contacts L-citrulline. L-citrulline contacts are provided by arginine 124, serine 171, serine 180, glutamate 253, and tyrosine 265.

Belongs to the argininosuccinate synthase family. Type 1 subfamily. Homotetramer.

Its subcellular location is the cytoplasm. It catalyses the reaction L-citrulline + L-aspartate + ATP = 2-(N(omega)-L-arginino)succinate + AMP + diphosphate + H(+). The protein operates within amino-acid biosynthesis; L-arginine biosynthesis; L-arginine from L-ornithine and carbamoyl phosphate: step 2/3. This chain is Argininosuccinate synthase, found in Saccharolobus solfataricus (strain ATCC 35092 / DSM 1617 / JCM 11322 / P2) (Sulfolobus solfataricus).